The primary structure comprises 178 residues: Cytidylate kinase (178 aa).

7–15 (GLPGSGTTS) is a binding site for ATP.

This sequence belongs to the cytidylate kinase family. Type 2 subfamily.

It localises to the cytoplasm. The enzyme catalyses CMP + ATP = CDP + ADP. It carries out the reaction dCMP + ATP = dCDP + ADP. This Methanospirillum hungatei JF-1 (strain ATCC 27890 / DSM 864 / NBRC 100397 / JF-1) protein is Cytidylate kinase.